A 256-amino-acid polypeptide reads, in one-letter code: Major prion protein (256 aa).

An N-terminal signal peptide occupies residues 1–24 (MVKSHIGSWILVLFVAMWSDVGLC). Residues 25–233 (KKRPKPGGGW…ESQAYYQRGA (209 aa)) form an interaction with GRB2, ERI3 and SYN1 region. Residues 28–110 (PKPGGGWNTG…QWNKPSKPKT (83 aa)) are disordered. Repeat copies occupy residues 54 to 62 (PQGGGGWGQ), 63 to 70 (PHGGGWGQ), 71 to 78 (PHGGGWGQ), 79 to 86 (PHGGGWGQ), and 87 to 95 (PHGGGGWGQ). Positions 54-95 (PQGGGGWGQPHGGGWGQPHGGGWGQPHGGGWGQPHGGGGWGQ) are 5 X 8 AA tandem repeats of P-H-G-G-G-W-G-Q. The span at 55 to 97 (QGGGGWGQPHGGGWGQPHGGGWGQPHGGGWGQPHGGGGWGQGG) shows a compositional bias: gly residues. Residues His64, Gly65, Gly66, His72, Gly73, Gly74, His80, Gly81, Gly82, His88, Gly90, and Gly91 each contribute to the Cu(2+) site. Cys182 and Cys217 are disulfide-bonded. 2 N-linked (GlcNAc...) asparagine glycosylation sites follow: Asn184 and Asn200. A lipid anchor (GPI-anchor amidated alanine) is attached at Ala233. A propeptide spans 234 to 256 (SVILFSSPPVILLISFLIFLIVG) (removed in mature form).

The protein belongs to the prion family. In terms of assembly, monomer and homodimer. Has a tendency to aggregate into amyloid fibrils containing a cross-beta spine, formed by a steric zipper of superposed beta-strands. Soluble oligomers may represent an intermediate stage on the path to fibril formation. Copper binding may promote oligomerization. Interacts with GRB2, APP, ERI3/PRNPIP and SYN1. Mislocalized cytosolically exposed PrP interacts with MGRN1; this interaction alters MGRN1 subcellular location and causes lysosomal enlargement. Interacts with KIAA1191.

It is found in the cell membrane. It localises to the golgi apparatus. Its function is as follows. Its primary physiological function is unclear. Has cytoprotective activity against internal or environmental stresses. May play a role in neuronal development and synaptic plasticity. May be required for neuronal myelin sheath maintenance. May play a role in iron uptake and iron homeostasis. Soluble oligomers are toxic to cultured neuroblastoma cells and induce apoptosis (in vitro). Association with GPC1 (via its heparan sulfate chains) targets PRNP to lipid rafts. Also provides Cu(2+) or Zn(2+) for the ascorbate-mediated GPC1 deaminase degradation of its heparan sulfate side chains. The sequence is that of Major prion protein (PRNP) from Ovis canadensis (Bighorn sheep).